A 451-amino-acid chain; its full sequence is UDP-N-acetylmuramoylalanine--D-glutamate ligase (451 aa).

Residue 118 to 124 (GTKGKST) participates in ATP binding.

It belongs to the MurCDEF family.

Its subcellular location is the cytoplasm. The catalysed reaction is UDP-N-acetyl-alpha-D-muramoyl-L-alanine + D-glutamate + ATP = UDP-N-acetyl-alpha-D-muramoyl-L-alanyl-D-glutamate + ADP + phosphate + H(+). It functions in the pathway cell wall biogenesis; peptidoglycan biosynthesis. Functionally, cell wall formation. Catalyzes the addition of glutamate to the nucleotide precursor UDP-N-acetylmuramoyl-L-alanine (UMA). The protein is UDP-N-acetylmuramoylalanine--D-glutamate ligase of Borreliella afzelii (strain PKo) (Borrelia afzelii).